The primary structure comprises 258 residues: Small ribosomal subunit protein mS40 (258 aa).

The N-terminal 35 residues, 1-35, are a transit peptide targeting the mitochondrion; sequence MAASVLNTLLRRLPMLSLFRGAHRVQVPLQTLCTK. Phosphoserine is present on residues Ser-38 and Ser-49. The disordered stretch occupies residues 218–258; the sequence is RLYQGHLREESGPPPESMPKMPPTAPAEASFTGQTDPQSAL. Positions 229–242 are enriched in pro residues; it reads GPPPESMPKMPPTA. Positions 248–258 are enriched in polar residues; the sequence is FTGQTDPQSAL.

It belongs to the bacterial ribosomal protein bS18 family. Mitochondrion-specific ribosomal protein mS40 subfamily. In terms of assembly, component of the mitochondrial ribosome small subunit (28S) which comprises a 12S rRNA and about 30 distinct proteins.

The protein resides in the mitochondrion. The polypeptide is Small ribosomal subunit protein mS40 (MRPS18B) (Macaca mulatta (Rhesus macaque)).